The primary structure comprises 101 residues: Small ribosomal subunit protein uS10 (101 aa).

This sequence belongs to the universal ribosomal protein uS10 family. Part of the 30S ribosomal subunit.

Involved in the binding of tRNA to the ribosomes. The protein is Small ribosomal subunit protein uS10 of Corynebacterium efficiens (strain DSM 44549 / YS-314 / AJ 12310 / JCM 11189 / NBRC 100395).